An 880-amino-acid polypeptide reads, in one-letter code: Pyruvate, phosphate dikinase (880 aa).

An N-terminal region spans residues 1–348 (MNKLIYYFGN…LYILQTRTAK (348 aa)). R97 is a binding site for ATP. The linker 1 stretch occupies residues 349–405 (RTAIAAINIAVQMVEEKLISKEQALMRIDPESLNQLLHTRIDYSKKLTAIAEGLPAS). Positions 406-503 (PGAATGIVVF…VIKQGDIITI (98 aa)) are central. T458 carries the phosphothreonine; by PDRP1 modification. The active-site Tele-phosphohistidine intermediate is the H460. Positions 504 to 538 (DGGSGKIFLGEMPLIQPTFSEESTLILDWADEISS) are linker 2. A C-terminal region spans residues 539 to 879 (LKVRANAETV…AAAQAKIKQG (341 aa)). Substrate contacts are provided by R566, R622, E750, G771, T772, N773, and D774. Position 750 (E750) interacts with Mg(2+). D774 is a binding site for Mg(2+). C836 (proton donor) is an active-site residue.

The protein belongs to the PEP-utilizing enzyme family. As to quaternary structure, homodimer. It depends on Mg(2+) as a cofactor. Phosphorylation of Thr-458 in the dark inactivates the enzyme. Dephosphorylation upon light stimulation reactivates the enzyme.

The enzyme catalyses pyruvate + phosphate + ATP = phosphoenolpyruvate + AMP + diphosphate + H(+). Activated by light-induced dephosphorylation. Inhibited by dark-induced phosphorylation. Both reactions are catalyzed by PDRP1. Functionally, catalyzes the reversible phosphorylation of pyruvate and phosphate. This is Pyruvate, phosphate dikinase (ppdK) from Rickettsia typhi (strain ATCC VR-144 / Wilmington).